A 213-amino-acid chain; its full sequence is Motile sperm domain-containing protein 1 (213 aa).

The region spanning 16-143 (PVFVFPTELI…KEHLTESLFF (128 aa)) is the MSP domain. A run of 2 helical transmembrane segments spans residues 159-179 (SLLT…PTLG) and 191-211 (LSVN…MAIL). The short motif at 205–208 (LITM) is the Nuclear export signal element.

It localises to the endoplasmic reticulum membrane. The protein resides in the golgi apparatus membrane. Plays a role in differentiation and/or proliferation of mesenchymal stem cells. Proposed to be involved in epithelial-to-mesenchymal transition (EMT). However, another study suggests that it is not required for EMT or stem cell self-renewal and acts during later stages of differentiation. This chain is Motile sperm domain-containing protein 1 (MOSPD1), found in Pongo abelii (Sumatran orangutan).